Consider the following 474-residue polypeptide: MSLTIAIVGRPNVGKSTLFNRLVGQKLALVDDKPGVTRDRRIHAAKLQDLRFDVIDTAGLEEAGDHTLEGRMRSQTKAAIDEADLILFVFDAKSGITPSDLNFASLVRKSGKPIVLVANKSESKAATGGEYEAWSLGLGEPCPISAEHGLGLSDLRDAIIDAVGSERAFSNNKEEDMTIQPASVGDDIEDLQEEGLIYDESKPIRIAIAGRPNTGKSTLINSMLKQDRLLTGPEAGLTRDSISVDWEWRGRHIKLFDTAGLRRKSKIQEKLEKLSVADTLRAIRFAEVVVIVFDATMPFEKQDLQIADLVIREGRVPVIAFNKWDLIENSQATLIDLHEKCARFLPQVRGLRAVPLSGQYGQGIDKLMENIMMMHRVWNRRISTAKLNQWLEIVVAHHPPPAISGRRLKVKYITQVKTRPPGFMISCSRPKVMPQSYLRYLVNGLRETFDMSGIPVRLSLRASDNPFATRAKKK.

2 consecutive EngA-type G domains span residues 3–167 (LTIA…GSER) and 204–379 (IRIA…RVWN). GTP is bound by residues 9 to 16 (GRPNVGKS), 56 to 60 (DTAGL), 119 to 122 (NKSE), 210 to 217 (GRPNTGKS), 257 to 261 (DTAGL), and 322 to 325 (NKWD). The KH-like domain occupies 380-464 (RRISTAKLNQ…PVRLSLRASD (85 aa)).

The protein belongs to the TRAFAC class TrmE-Era-EngA-EngB-Septin-like GTPase superfamily. EngA (Der) GTPase family. As to quaternary structure, associates with the 50S ribosomal subunit.

GTPase that plays an essential role in the late steps of ribosome biogenesis. This chain is GTPase Der, found in Bartonella tribocorum (strain CIP 105476 / IBS 506).